Reading from the N-terminus, the 155-residue chain is NADH-ubiquinone oxidoreductase chain 6 (155 aa).

4 helical membrane-spanning segments follow: residues 10 to 30 (ILAIGLLSPVQSIVCLIVLFV), 43 to 63 (LMGILYVLIYVGAIAILFLFI), 75 to 95 (GTIHPLIFTILIICLIPLDLS), and 133 to 153 (AIPMILIGLILILSVIGAIAI).

Belongs to the complex I subunit 6 family.

It is found in the mitochondrion membrane. It carries out the reaction a ubiquinone + NADH + 5 H(+)(in) = a ubiquinol + NAD(+) + 4 H(+)(out). Functionally, core subunit of the mitochondrial membrane respiratory chain NADH dehydrogenase (Complex I) that is believed to belong to the minimal assembly required for catalysis. Complex I functions in the transfer of electrons from NADH to the respiratory chain. The immediate electron acceptor for the enzyme is believed to be ubiquinone. The chain is NADH-ubiquinone oxidoreductase chain 6 (ND6) from Candida parapsilosis (Yeast).